The primary structure comprises 974 residues: Zinc finger protein 280D (974 aa).

Residues Lys-44, Lys-46, Lys-86, Lys-99, Lys-138, Lys-201, Lys-222, Lys-245, Lys-287, and Lys-304 each participate in a glycyl lysine isopeptide (Lys-Gly) (interchain with G-Cter in SUMO2) cross-link. A disordered region spans residues 188 to 216 (KRPSGSDISSVNPKKPKPSENTSGIDASS). 2 C2H2-type zinc fingers span residues 333–355 (FKCF…MKHH) and 370–393 (TTCQ…ESTH). Residues 400 to 424 (TICKICELSFETEQILLQHMKDNHK) form a C2H2-type 3; degenerate zinc finger. C2H2-type zinc fingers lie at residues 430–453 (YICQ…RTSH) and 459–481 (LLCP…YMKH). Disordered stretches follow at residues 507–624 (TQHH…KVNT), 751–797 (IKTE…EGTG), and 815–974 (VTVS…EERS). Residues 539–557 (SGSSVTPSISPSTSTLQLS) show a composition bias toward low complexity. Ser-557 is modified (phosphoserine). The segment covering 571 to 587 (KLTTSTPNTTISDPSKA) has biased composition (polar residues). Low complexity predominate over residues 591 to 611 (KSNGSKSKNKSKVSNMQKKQS). Positions 612 to 624 (TLSSSNKKSKVNT) are enriched in polar residues. A Glycyl lysine isopeptide (Lys-Gly) (interchain with G-Cter in SUMO2) cross-link involves residue Lys-752. The span at 763 to 775 (VSKETARHSRAEG) shows a compositional bias: basic and acidic residues. The segment covering 817-829 (VSDTENVSSSKNI) has biased composition (polar residues). The span at 830–860 (LSHDPDVGTDTMEKEEKTHHACQEMELKVDQ) shows a compositional bias: basic and acidic residues. Polar residues predominate over residues 861 to 884 (SSESTNPTEAELSSETRQGLQLTS). Residues Ser-904 and Ser-907 each carry the phosphoserine modification. The segment covering 938–950 (SANTSDTVSDQTG) has biased composition (polar residues).

Its subcellular location is the nucleus. In terms of biological role, may function as a transcription factor. The chain is Zinc finger protein 280D (Znf280d) from Mus musculus (Mouse).